Reading from the N-terminus, the 634-residue chain is Sodium-dependent neutral amino acid transporter B(0)AT1 (634 aa).

At 1–41 (MVRLVLPNPGLEERIPSLDELEVIEKEEAGSRPKWDNKAQY) the chain is on the cytoplasmic side. S17 bears the Phosphoserine mark. A helical membrane pass occupies residues 42-62 (MLTCVGFCVGLGNVWRFPYLC). The Extracellular segment spans residues 63-67 (QSHGG). Residues 68-88 (GAFMIPFLILLVFEGIPLLYL) form a helical membrane-spanning segment. Residues 89–119 (EFAIGQRLRKGSMGVWSSIHPALKGIGIASM) are Cytoplasmic-facing. Residues 120 to 140 (FVSFMVGLYYNTIIAWVMWYF) traverse the membrane as a helical segment. Topologically, residues 141–192 (FNSFQEPLPWSECPLNQNQTGYVEECAKSSSVDYFWYRETLNISTSISDSGS) are extracellular. Residues N158 and N182 are each glycosylated (N-linked (GlcNAc...) asparagine). The helical transmembrane segment at 193 to 213 (IQWWILLCLTCAWSVLYVCII) threads the bilayer. Topologically, residues 214-221 (RGIETTGK) are cytoplasmic. The chain crosses the membrane as a helical span at residues 222–242 (AVYITSTLPYVVLTIFLIRGL). Residues 243–268 (TLKGATNGIVFLFTPNITELSNPNTW) are Extracellular-facing. N258 carries N-linked (GlcNAc...) asparagine glycosylation. Residues 269–289 (LDAGAQVFYSFSLAFGGLISF) form a helical membrane-spanning segment. The Cytoplasmic portion of the chain corresponds to 290 to 304 (SSYNSVHNNCEMDSV). Residues 305-325 (IVSVINGFTSVYAATVVYSII) form a helical membrane-spanning segment. Residues 326-413 (GFRATERFDD…TEAITKMPVS (88 aa)) are Extracellular-facing. N354 and N368 each carry an N-linked (GlcNAc...) asparagine glycan. Residues 414 to 434 (PLWSVLFFIMLFCLGLSSMFG) traverse the membrane as a helical segment. Over 435–456 (NMEGVVVPLQDLNITPKKWPKE) the chain is Cytoplasmic. Residues 457-477 (LLTGLICLGTYLIAFIFTLNS) traverse the membrane as a helical segment. The Extracellular segment spans residues 478-487 (GQYWLSLLDS). A helical transmembrane segment spans residues 488–508 (FAGSIPLLIIAFCEMFAVVYV). The Cytoplasmic segment spans residues 509-531 (YGVDRFNKDIEFMIGHKPNIFWQ). Residues 532–552 (VTWRVVSPLIMLVIFLFFFVI) traverse the membrane as a helical segment. The Extracellular segment spans residues 553–581 (EVNKTLMYSIWDPNYEEFPKSQKIPYPNW). A glycan (N-linked (GlcNAc...) asparagine) is linked at N555. Residues 582–602 (VYAVVVTVAGVPCLSIPCFAI) form a helical membrane-spanning segment. Residues 603–634 (YKFIRNCCQKSDDHHGLVNTLSTASVNGDLKN) are Cytoplasmic-facing. S627 is subject to Phosphoserine.

The protein belongs to the sodium:neurotransmitter symporter (SNF) (TC 2.A.22) family. SLC6A19 subfamily. Interacts in a tissue-specific manner with ACE2 in small intestine and with CLTRN in the kidney. Interacts with CLTRN; this interaction is required for trafficking of SLC6A19 to the plasma membrane and for its catalytic activation in kidneys. Interacts with ACE2; this interaction is required for trafficking of SLC6A19 to the plasma membrane and for its catalytic activation in intestine. Interacts with ANPEP; the interaction positively regulates its amino acid transporter activity. Predominantly expressed in kidney and small intestine (at protein level). Expressed in the intestinal brush border (at protein level). Expression not observed in other organs, such as lung, skeletal muscle, brain, liver and pancreas. In kidney, expression is localized in the renal cortex but not in the medulla. Substantial amounts of expression in the proximal tubules. The distal nephron segments and the glomeruli are consistently negative. In the small intestine, expression is exclusively localized in villus enterocytes. High resolution of the hybridization-positive villi reveals a gradient of expression with the highest levels in apical cells. Not detected in crypt cells or in any other cell types of the small intestine.

Its subcellular location is the cell membrane. The catalysed reaction is L-alanine(in) + Na(+)(in) = L-alanine(out) + Na(+)(out). The enzyme catalyses L-cysteine(in) + Na(+)(in) = L-cysteine(out) + Na(+)(out). It carries out the reaction L-glutamine(in) + Na(+)(in) = L-glutamine(out) + Na(+)(out). It catalyses the reaction glycine(in) + Na(+)(in) = glycine(out) + Na(+)(out). The catalysed reaction is L-isoleucine(in) + Na(+)(in) = L-isoleucine(out) + Na(+)(out). The enzyme catalyses L-leucine(in) + Na(+)(in) = L-leucine(out) + Na(+)(out). It carries out the reaction L-methionine(in) + Na(+)(in) = L-methionine(out) + Na(+)(out). It catalyses the reaction L-phenylalanine(in) + Na(+)(in) = L-phenylalanine(out) + Na(+)(out). The catalysed reaction is L-serine(in) + Na(+)(in) = L-serine(out) + Na(+)(out). The enzyme catalyses L-tryptophan(in) + Na(+)(in) = L-tryptophan(out) + Na(+)(out). It carries out the reaction L-tyrosine(in) + Na(+)(in) = L-tyrosine(out) + Na(+)(out). It catalyses the reaction L-valine(in) + Na(+)(in) = L-valine(out) + Na(+)(out). Functionally, transporter that mediates resorption of neutral amino acids across the apical membrane of renal and intestinal epithelial cells. This uptake is sodium-dependent and chloride-independent. Requires CLTRN in kidney or ACE2 in intestine for cell surface expression and amino acid transporter activity. The sequence is that of Sodium-dependent neutral amino acid transporter B(0)AT1 (Slc6a19) from Mus musculus (Mouse).